Consider the following 544-residue polypeptide: Baeyer-Villiger monooxygenase (544 aa).

FAD-binding residues include F27, E47, W56, D67, Y73, and V119.

The protein belongs to the FAD-binding monooxygenase family. The cofactor is FAD.

Its function is as follows. Catalyzes a Baeyer-Villiger oxidation reaction, i.e. the insertion of an oxygen atom into a carbon-carbon bond adjacent to a carbonyl, which converts ketones to esters or lactones using NADPH as an electron donor. Besides cycloalkanones, can use cyclic alpha,beta-unsaturated ketones as substrates, leading to enol-lactones. Can also act on methylated cycloalkanones and methylated cycloalkenones with high enantioselectivity in some cases. This chain is Baeyer-Villiger monooxygenase, found in Parvibaculum lavamentivorans (strain DS-1 / DSM 13023 / NCIMB 13966).